The chain runs to 207 residues: dTTP/UTP pyrophosphatase (207 aa).

Aspartate 79 acts as the Proton acceptor in catalysis.

This sequence belongs to the Maf family. YhdE subfamily. Requires a divalent metal cation as cofactor.

The protein localises to the cytoplasm. It carries out the reaction dTTP + H2O = dTMP + diphosphate + H(+). The enzyme catalyses UTP + H2O = UMP + diphosphate + H(+). Functionally, nucleoside triphosphate pyrophosphatase that hydrolyzes dTTP and UTP. May have a dual role in cell division arrest and in preventing the incorporation of modified nucleotides into cellular nucleic acids. The chain is dTTP/UTP pyrophosphatase from Rhodopseudomonas palustris (strain BisB5).